Here is a 185-residue protein sequence, read N- to C-terminus: Guanylate kinase (185 aa).

Positions Gly-4 to Glu-181 constitute a Guanylate kinase-like domain. ATP is bound at residue Gly-11–Ser-18.

Belongs to the guanylate kinase family.

Its subcellular location is the cytoplasm. It carries out the reaction GMP + ATP = GDP + ADP. Its function is as follows. Essential for recycling GMP and indirectly, cGMP. The sequence is that of Guanylate kinase from Fusobacterium nucleatum subsp. nucleatum (strain ATCC 25586 / DSM 15643 / BCRC 10681 / CIP 101130 / JCM 8532 / KCTC 2640 / LMG 13131 / VPI 4355).